A 250-amino-acid polypeptide reads, in one-letter code: CCN family member 5 (250 aa).

An N-terminal signal peptide occupies residues 1-23; the sequence is MRGSPLIRLLATSFLCLLSMVCA. Disulfide bonds link Cys22–Cys50, Cys26–Cys52, Cys32–Cys53, Cys39–Cys56, Cys64–Cys78, and Cys70–Cys100. Residues 24–103 enclose the IGFBP N-terminal domain; that stretch reads QLCRTPCTCP…DEDDGDCEVN (80 aa). The VWFC domain maps to 98–164; sequence GDCEVNGRRY…GKCCPEWVCD (67 aa). Residues 194-238 form the TSP type-1 domain; it reads WPNWSTAWGPCSTTCGLGIATRVSNQNRFCQLEIQRRLCLPRPCL. A glycan (N-linked (GlcNAc...) asparagine) is linked at Asn196.

This sequence belongs to the CCN family.

It localises to the secreted. In terms of biological role, may play an important role in modulating bone turnover. Promotes the adhesion of osteoblast cells and inhibits the binding of fibrinogen to integrin receptors. In addition, inhibits osteocalcin production. This is CCN family member 5 (Ccn5) from Rattus norvegicus (Rat).